The chain runs to 251 residues: Squamosa promoter-binding-like protein 4 (251 aa).

Residues Met1–Pro15 show a composition bias toward pro residues. The tract at residues Met1–Gly64 is disordered. Residues Ala24 to Ala43 are compositionally biased toward low complexity. Residues Glu65–Pro142 form an SBP-type zinc finger. Zn(2+)-binding residues include Cys68, Cys73, Cys90, His93, Cys109, Cys112, His116, and Cys128. Positions Lys125–Lys141 match the Bipartite nuclear localization signal motif.

As to expression, expressed in stems, leaf sheaths, and young panicles.

The protein localises to the nucleus. Its function is as follows. Trans-acting factor that binds specifically to the consensus nucleotide sequence 5'-TNCGTACAA-3'. May be involved in panicle development. The sequence is that of Squamosa promoter-binding-like protein 4 (SPL4) from Oryza sativa subsp. japonica (Rice).